A 644-amino-acid polypeptide reads, in one-letter code: Exoribonuclease 2 (644 aa).

In terms of domain architecture, RNB spans 189–516; the sequence is RRDLTALDFV…NHRLLKAIIK (328 aa). Residues 561–643 form the S1 motif domain; sequence DTRFAAEIID…ETRSIIARPA (83 aa).

Belongs to the RNR ribonuclease family. RNase II subfamily.

Its subcellular location is the cytoplasm. It carries out the reaction Exonucleolytic cleavage in the 3'- to 5'-direction to yield nucleoside 5'-phosphates.. Involved in mRNA degradation. Hydrolyzes single-stranded polyribonucleotides processively in the 3' to 5' direction. In Klebsiella pneumoniae subsp. pneumoniae (strain ATCC 700721 / MGH 78578), this protein is Exoribonuclease 2.